A 376-amino-acid polypeptide reads, in one-letter code: Ribonucleoside-diphosphate reductase 1 subunit beta (376 aa).

Residues D85, E116, and H119 each contribute to the Fe cation site. Residue Y123 is part of the active site. E205, E239, and H242 together coordinate Fe cation.

The protein belongs to the ribonucleoside diphosphate reductase small chain family. In terms of assembly, tetramer of two alpha (R1) and two beta (R2) subunits. The B1 protein is a dimer of alpha subunits. A radical transfer pathway occurs between Tyr-123 of R2 and R1. The cofactor is Fe cation.

The catalysed reaction is a 2'-deoxyribonucleoside 5'-diphosphate + [thioredoxin]-disulfide + H2O = a ribonucleoside 5'-diphosphate + [thioredoxin]-dithiol. In terms of biological role, provides the precursors necessary for DNA synthesis. Catalyzes the biosynthesis of deoxyribonucleotides from the corresponding ribonucleotides. R2 contains the tyrosyl radical required for catalysis. The sequence is that of Ribonucleoside-diphosphate reductase 1 subunit beta (nrdB) from Escherichia coli O157:H7.